The following is a 66-amino-acid chain: Large ribosomal subunit protein bL35 (66 aa).

Basic residues predominate over residues 1-15 (MPKMKTKSSAKKRFK). The interval 1-32 (MPKMKTKSSAKKRFKMTATGKVRAGQAGKRHG) is disordered.

This sequence belongs to the bacterial ribosomal protein bL35 family.

This is Large ribosomal subunit protein bL35 from Dinoroseobacter shibae (strain DSM 16493 / NCIMB 14021 / DFL 12).